The sequence spans 351 residues: c-di-GMP synthase (351 aa).

The protein belongs to the CD-NTase family. E05 subfamily.

The catalysed reaction is 2 GTP = 3',3'-c-di-GMP + 2 diphosphate. Cyclic nucleotide synthase (second messenger synthase) of a CBASS antivirus system. CBASS (cyclic oligonucleotide-based antiphage signaling system) provides immunity against bacteriophage. The CD-NTase protein synthesizes cyclic nucleotides in response to infection; these serve as specific second messenger signals. The signals activate a diverse range of effectors, leading to bacterial cell death and thus abortive phage infection. A type I-D(GG) CBASS system. Its function is as follows. Cyclic dinucleotide synthase that catalyzes the synthesis of c-di-GMP, has no activity with other NTP substrates. This is c-di-GMP synthase (cdnE) from Capnocytophaga granulosa (strain ATCC 51502 / DSM 11449 / JCM 8566 / LMG 16022 / NCTC 12948 / B0611).